A 229-amino-acid polypeptide reads, in one-letter code: MAHVGSRKRSRSRSRSRSGRRGSEKRSKRSSKDASRNCSASRSQGHKAGSASGVEERSKHKAQRTSRSSSTSSSSSSSSSASSSSSSDGRKKRAKHKEKKRKKKKKKRKKKLKKRVKEKAVAVHQAEALPGPSLDQWHRSAGEDNDGPVLTDEQKSRIQAMKPMTKEEWDARQSVIRKVVDPETGRTRLIKGDGEVLEEIVTKERHREINKQATRGDGLAFQMRTGLLP.

A compositionally biased stretch (basic residues) spans 1 to 20; the sequence is MAHVGSRKRSRSRSRSRSGR. Residues 1–152 form a disordered region; it reads MAHVGSRKRS…EDNDGPVLTD (152 aa). A compositionally biased stretch (basic and acidic residues) spans 21–35; it reads RGSEKRSKRSSKDAS. The segment covering 66–87 has biased composition (low complexity); sequence SRSSSTSSSSSSSSSASSSSSS. The span at 90-117 shows a compositional bias: basic residues; it reads RKKRAKHKEKKRKKKKKKRKKKLKKRVK. 2 positions are modified to phosphoserine: serine 140 and serine 174. Lysine 191 participates in a covalent cross-link: Glycyl lysine isopeptide (Lys-Gly) (interchain with G-Cter in SUMO2).

The protein belongs to the ARL6IP4 family. Interacts with ZCCHC17. Interacts with SRSF2. Interacts with ARL6. As to expression, widely expressed. Expressed at high level in testis and thymus.

Its subcellular location is the nucleus. It localises to the nucleolus. The protein localises to the nucleus speckle. In terms of biological role, involved in modulating alternative pre-mRNA splicing with either 5' distal site activation or preferential use of 3' proximal site. This Mus musculus (Mouse) protein is ADP-ribosylation factor-like protein 6-interacting protein 4 (Arl6ip4).